The chain runs to 334 residues: Heat-inducible transcription repressor HrcA (334 aa).

Belongs to the HrcA family.

Negative regulator of class I heat shock genes (grpE-dnaK-dnaJ and groELS operons). Prevents heat-shock induction of these operons. This Albidiferax ferrireducens (strain ATCC BAA-621 / DSM 15236 / T118) (Rhodoferax ferrireducens) protein is Heat-inducible transcription repressor HrcA.